The chain runs to 623 residues: Oviduct-specific glycoprotein (623 aa).

The first 21 residues, 1–21 (MWKLLLWVGLVLVLKHHDGAA), serve as a signal peptide directing secretion. The GH18 domain occupies 22-385 (HKLVCYFTNW…YVMNDILVRA (364 aa)). An intrachain disulfide couples Cys-26 to Cys-51. Residues 71-72 (LQ), 98-101 (GGWN), Tyr-142, 211-214 (LSYD), and Trp-355 each bind chitin. 2 N-linked (GlcNAc...) asparagine glycosylation sites follow: Asn-402 and Asn-441. Disordered stretches follow at residues 539–558 (LTPVGHPSVTPVSHQSVSPG) and 594–623 (RKISVTPEGQTVPLRGEYLTSETGTHPQDG). Positions 613 to 623 (TSETGTHPQDG) are enriched in polar residues.

This sequence belongs to the glycosyl hydrolase 18 family. In terms of tissue distribution, oviduct.

It localises to the cytoplasmic vesicle. It is found in the secretory vesicle. Its function is as follows. Binds to oocyte zona pellucida in vivo. May play a role in the fertilization process and/or early embryonic development. This Papio anubis (Olive baboon) protein is Oviduct-specific glycoprotein (OVGP1).